The chain runs to 63 residues: Large ribosomal subunit protein uL29 (63 aa).

It belongs to the universal ribosomal protein uL29 family.

The protein is Large ribosomal subunit protein uL29 of Enterobacter sp. (strain 638).